A 179-amino-acid polypeptide reads, in one-letter code: Large ribosomal subunit protein uL5 (179 aa).

Belongs to the universal ribosomal protein uL5 family. As to quaternary structure, part of the 50S ribosomal subunit; part of the 5S rRNA/L5/L18/L25 subcomplex. Contacts the 5S rRNA and the P site tRNA. Forms a bridge to the 30S subunit in the 70S ribosome.

Its function is as follows. This is one of the proteins that bind and probably mediate the attachment of the 5S RNA into the large ribosomal subunit, where it forms part of the central protuberance. In the 70S ribosome it contacts protein S13 of the 30S subunit (bridge B1b), connecting the 2 subunits; this bridge is implicated in subunit movement. Contacts the P site tRNA; the 5S rRNA and some of its associated proteins might help stabilize positioning of ribosome-bound tRNAs. The sequence is that of Large ribosomal subunit protein uL5 from Pseudomonas savastanoi pv. phaseolicola (strain 1448A / Race 6) (Pseudomonas syringae pv. phaseolicola (strain 1448A / Race 6)).